The chain runs to 498 residues: ATP synthase subunit beta, chloroplastic (498 aa).

Position 172 to 179 (172 to 179 (GGAGVGKT)) interacts with ATP.

The protein belongs to the ATPase alpha/beta chains family. In terms of assembly, F-type ATPases have 2 components, CF(1) - the catalytic core - and CF(0) - the membrane proton channel. CF(1) has five subunits: alpha(3), beta(3), gamma(1), delta(1), epsilon(1). CF(0) has four main subunits: a(1), b(1), b'(1) and c(9-12).

Its subcellular location is the plastid. It localises to the chloroplast thylakoid membrane. It catalyses the reaction ATP + H2O + 4 H(+)(in) = ADP + phosphate + 5 H(+)(out). Functionally, produces ATP from ADP in the presence of a proton gradient across the membrane. The catalytic sites are hosted primarily by the beta subunits. The chain is ATP synthase subunit beta, chloroplastic from Nymphaea alba (White water-lily).